A 39-amino-acid chain; its full sequence is Protein disulfide-isomerase A3 (39 aa).

Belongs to the protein disulfide isomerase family. Part of the major histocompatibility complex class I (MHC I) peptide loading complex composed of TAP1, TAP2, B2M, MHC heavy chain, TAPBP, PDIA3, and CALR. Interacts with ERP27 and CANX. Interacts with SERPINA2 and with SERPINA1. Interacts with ATP2A2. Within the major histocompatibility complex class I (MHC I) peptide loading complex forms reversible disulfide-linked heterodimers with TAPBP as part of its protein folding chaperone activity. This is essential to assist the dynamic assembly of the MHC I complex with high affinity antigens in the endoplasmic reticulum. In terms of processing, phosphorylated. Predominantly expressed in liver. Low in brain, testis and colon. Not detectable in pancreas and skeletal muscle.

It is found in the endoplasmic reticulum. The protein resides in the endoplasmic reticulum lumen. Its subcellular location is the melanosome. It catalyses the reaction Catalyzes the rearrangement of -S-S- bonds in proteins.. Functionally, protein disulfide isomerase that catalyzes the formation, isomerization, and reduction or oxidation of disulfide bonds in client proteins and functions as a protein folding chaperone. Core component of the major histocompatibility complex class I (MHC I) peptide loading complex where it functions as an essential folding chaperone for TAPBP. Through TAPBP, assists the dynamic assembly of the MHC I complex with high affinity antigens in the endoplasmic reticulum. Therefore, plays a crucial role in the presentation of antigens to cytotoxic T cells in adaptive immunity. The protein is Protein disulfide-isomerase A3 (PDIA3) of Papio hamadryas (Hamadryas baboon).